A 118-amino-acid polypeptide reads, in one-letter code: Large ribosomal subunit protein bL20 (118 aa).

It belongs to the bacterial ribosomal protein bL20 family.

In terms of biological role, binds directly to 23S ribosomal RNA and is necessary for the in vitro assembly process of the 50S ribosomal subunit. It is not involved in the protein synthesizing functions of that subunit. The polypeptide is Large ribosomal subunit protein bL20 (Caldicellulosiruptor saccharolyticus (strain ATCC 43494 / DSM 8903 / Tp8T 6331)).